The primary structure comprises 215 residues: Dual specificity phosphatase 29 (215 aa).

The 149-residue stretch at 53–201 (HVNEVWPRLH…LRELDKQLVK (149 aa)) folds into the Tyrosine-protein phosphatase domain. Residue 145 to 152 (HCAMGRSR) participates in substrate binding. Cysteine 146 acts as the Phosphocysteine intermediate in catalysis.

Belongs to the protein-tyrosine phosphatase family. Non-receptor class dual specificity subfamily. Homodimer. Interacts with PRKAA2. Skeletal muscle, liver and adipose tissue.

Its subcellular location is the cytoplasm. It is found in the nucleus. It carries out the reaction O-phospho-L-tyrosyl-[protein] + H2O = L-tyrosyl-[protein] + phosphate. The catalysed reaction is O-phospho-L-seryl-[protein] + H2O = L-seryl-[protein] + phosphate. The enzyme catalyses O-phospho-L-threonyl-[protein] + H2O = L-threonyl-[protein] + phosphate. Dual specificity phosphatase able to dephosphorylate phosphotyrosine, phosphoserine and phosphothreonine residues within the same substrate, with a preference for phosphotyrosine as a substrate. Involved in the modulation of intracellular signaling cascades. In skeletal muscle regulates systemic glucose homeostasis by activating, AMPK, an energy sensor protein kinase. Affects MAP kinase signaling though modulation of the MAPK1/2 cascade in skeletal muscle promoting muscle cell differentiation, development and atrophy. In Mus musculus (Mouse), this protein is Dual specificity phosphatase 29.